The primary structure comprises 304 residues: tRNA-uridine aminocarboxypropyltransferase 1 (304 aa).

The residue at position 2 (serine 2) is an N-acetylserine. The DXTW signature appears at 206–209; it reads DSTW.

It belongs to the TDD superfamily. DTWD1 family.

It localises to the nucleus. The enzyme catalyses a uridine in tRNA + S-adenosyl-L-methionine = a 3-[(3S)-3-amino-3-carboxypropyl]uridine in tRNA + S-methyl-5'-thioadenosine + H(+). Functionally, catalyzes the formation of 3-(3-amino-3-carboxypropyl)uridine (acp3U) at position 20 in the D-loop of several cytoplasmic tRNAs (acp3U(20)). This Pongo abelii (Sumatran orangutan) protein is tRNA-uridine aminocarboxypropyltransferase 1.